A 647-amino-acid polypeptide reads, in one-letter code: Solute carrier family 23 member 2 (647 aa).

Polar residues predominate over residues 1 to 11; it reads MMGVGKNTSKS. A disordered region spans residues 1 to 26; sequence MMGVGKNTSKSVEVGGSTEGKYEEEA. Over 8-109 the chain is Cytoplasmic; sequence TSKSVEVGGS…LCIFLGLQHY (102 aa). Position 69 is a phosphoserine (Ser-69). Thr-74 carries the phosphothreonine modification. Ser-77 is subject to Phosphoserine. Thr-78 carries the post-translational modification Phosphothreonine. At Ser-80 the chain carries Phosphoserine. Residues 110 to 130 form a helical membrane-spanning segment; that stretch reads LTCFSGTIAVPFLLADAMCVG. The Extracellular segment spans residues 131–138; it reads DDQWATSQ. A helical membrane pass occupies residues 139–159; the sequence is LIGTIFFCVGITTLLQTTFGC. A topological domain (cytoplasmic) is located at residue Arg-160. Residues 161-181 traverse the membrane as a helical segment; sequence LPLFQASAFAFLAPARAILSL. At 182-215 the chain is on the extracellular side; sequence DKWKCNTTEITVANGTAELLEHIWHPRIQEIQGA. Asn-187 and Asn-195 each carry an N-linked (GlcNAc...) asparagine glycan. A helical membrane pass occupies residues 216 to 236; sequence IIMSSLIEVVIGLLGLPGALL. Residues 237-263 lie on the Cytoplasmic side of the membrane; it reads RYIGPLTITPTVALIGLSGFQAAGERA. The chain crosses the membrane as a helical span at residues 264–281; it reads GKHWGIAMLTIFLVLLFS. Over 282 to 285 the chain is Extracellular; that stretch reads QYAR. The helical intramembrane region spans 286-299; that stretch reads NVKFPLPIYKSKKG. Topologically, residues 300–306 are extracellular; it reads WTAYKLQ. The helical transmembrane segment at 307–327 threads the bilayer; the sequence is LFKMFPIILAILVSWLLCFIF. Over 328-368 the chain is Cytoplasmic; sequence TVTDVFPSNSTDYGYYARTDARKGVLLVAPWFKVPYPFQWG. Residues 369–389 traverse the membrane as a helical segment; that stretch reads MPTVSAAGVIGMLSAVVASII. Residues 390–414 are Extracellular-facing; the sequence is ESIGDYYACARLSCAPPPPIHAINR. Residues 415–435 form a helical membrane-spanning segment; the sequence is GIFVEGLSCVLDGVFGTGNGS. Residues 436 to 458 lie on the Cytoplasmic side of the membrane; the sequence is TSSSPNIGVLGITKVGSRRVIQY. The chain crosses the membrane as a helical span at residues 459 to 479; that stretch reads GAALMLGLGMIGKFSALFASL. Over 480–482 the chain is Extracellular; it reads PDP. A helical membrane pass occupies residues 483 to 503; that stretch reads VLGALFCTLFGMITAVGLSNL. Residues 504–513 are Cytoplasmic-facing; it reads QFIDLNSSRN. A helical membrane pass occupies residues 514–534; that stretch reads LFVLGFSIFFGLVLPSYLRQN. The Extracellular segment spans residues 535-544; the sequence is PLVTGITGID. The chain crosses the membrane as a helical span at residues 545 to 565; the sequence is QVLNVLLTTAMFVGGCVAFIL. Topologically, residues 566–647 are cytoplasmic; that stretch reads DNTIPGTPEE…SSDKDSQATV (82 aa). Thr-646 is modified (phosphothreonine).

The protein belongs to the nucleobase:cation symporter-2 (NCS2) (TC 2.A.40) family. Interacts with CLSTN3. In terms of processing, phosphorylated. Highly expressed in neural, neuroendocrine, exocrine and endothelial tissues and in osteoblasts. Detected in neurons throughout the central nervous system, in meninges and choroid plexus, in the anterior pituitary, the intermediate lobe, in pancreas, adrenal cortex, gastric glands, and in the inner nuclear layer of the retina.

The protein localises to the cell membrane. It catalyses the reaction L-ascorbate(out) + 2 Na(+)(out) = L-ascorbate(in) + 2 Na(+)(in). In terms of biological role, sodium/ascorbate cotransporter. Mediates electrogenic uptake of vitamin C, with a stoichiometry of 2 Na(+) for each ascorbate. This chain is Solute carrier family 23 member 2 (Slc23a2), found in Rattus norvegicus (Rat).